The chain runs to 454 residues: Bifunctional protein GlmU (454 aa).

The pyrophosphorylase stretch occupies residues Met-1–Pro-228. UDP-N-acetyl-alpha-D-glucosamine-binding positions include Leu-10–Gly-13, Lys-24, Gln-76, Gly-81–Thr-82, Tyr-103–Asp-105, Gly-138, Glu-153, Asn-168, and Asn-226. Position 105 (Asp-105) interacts with Mg(2+). Asn-226 is a binding site for Mg(2+). The interval Trp-229–Gln-249 is linker. Positions Gly-250–Lys-454 are N-acetyltransferase. 2 residues coordinate UDP-N-acetyl-alpha-D-glucosamine: Arg-332 and Lys-350. His-362 functions as the Proton acceptor in the catalytic mechanism. Residues Tyr-365 and Asn-376 each coordinate UDP-N-acetyl-alpha-D-glucosamine. Residues Ala-379, Asn-385–Tyr-386, Ser-404, Ala-422, and Arg-439 each bind acetyl-CoA.

In the N-terminal section; belongs to the N-acetylglucosamine-1-phosphate uridyltransferase family. This sequence in the C-terminal section; belongs to the transferase hexapeptide repeat family. Homotrimer. The cofactor is Mg(2+).

It is found in the cytoplasm. It catalyses the reaction alpha-D-glucosamine 1-phosphate + acetyl-CoA = N-acetyl-alpha-D-glucosamine 1-phosphate + CoA + H(+). The catalysed reaction is N-acetyl-alpha-D-glucosamine 1-phosphate + UTP + H(+) = UDP-N-acetyl-alpha-D-glucosamine + diphosphate. The protein operates within nucleotide-sugar biosynthesis; UDP-N-acetyl-alpha-D-glucosamine biosynthesis; N-acetyl-alpha-D-glucosamine 1-phosphate from alpha-D-glucosamine 6-phosphate (route II): step 2/2. It functions in the pathway nucleotide-sugar biosynthesis; UDP-N-acetyl-alpha-D-glucosamine biosynthesis; UDP-N-acetyl-alpha-D-glucosamine from N-acetyl-alpha-D-glucosamine 1-phosphate: step 1/1. Its pathway is bacterial outer membrane biogenesis; LPS lipid A biosynthesis. In terms of biological role, catalyzes the last two sequential reactions in the de novo biosynthetic pathway for UDP-N-acetylglucosamine (UDP-GlcNAc). The C-terminal domain catalyzes the transfer of acetyl group from acetyl coenzyme A to glucosamine-1-phosphate (GlcN-1-P) to produce N-acetylglucosamine-1-phosphate (GlcNAc-1-P), which is converted into UDP-GlcNAc by the transfer of uridine 5-monophosphate (from uridine 5-triphosphate), a reaction catalyzed by the N-terminal domain. The chain is Bifunctional protein GlmU from Xanthomonas campestris pv. campestris (strain B100).